Here is a 1057-residue protein sequence, read N- to C-terminus: Carbamoyl phosphate synthase large chain (1057 aa).

The interval 1-401 is carboxyphosphate synthetic domain; sequence MPKRNDIKTI…SLLKAIRSLE (401 aa). The ATP site is built by R129, R169, G175, G176, K208, I210, E215, G241, I242, H243, Q284, and E298. Residues 133 to 327 enclose the ATP-grasp 1 domain; sequence RTLMNYLNVP…IAKLAAKIAV (195 aa). Mg(2+) contacts are provided by Q284, E298, and N300. The Mn(2+) site is built by Q284, E298, and N300. An oligomerization domain region spans residues 402 to 546; it reads YGVHHLGLPN…YGTYETENES (145 aa). Residues 547 to 929 form a carbamoyl phosphate synthetic domain region; that stretch reads IITDKEKILV…ALFKGLTGSG (383 aa). The region spanning 671-861 is the ATP-grasp 2 domain; it reads EALLRKINVP…MAQLAMRAII (191 aa). Positions 707, 746, 748, 752, 777, 778, 779, 780, 820, and 832 each coordinate ATP. Mg(2+) is bound by residues Q820, E832, and N834. Q820, E832, and N834 together coordinate Mn(2+). Positions 930–1057 constitute an MGS-like domain; sequence VEVKDHGTVL…ESMTFTMRQM (128 aa). Positions 930-1057 are allosteric domain; sequence VEVKDHGTVL…ESMTFTMRQM (128 aa).

This sequence belongs to the CarB family. Composed of two chains; the small (or glutamine) chain promotes the hydrolysis of glutamine to ammonia, which is used by the large (or ammonia) chain to synthesize carbamoyl phosphate. Tetramer of heterodimers (alpha,beta)4. Mg(2+) serves as cofactor. Mn(2+) is required as a cofactor.

It carries out the reaction hydrogencarbonate + L-glutamine + 2 ATP + H2O = carbamoyl phosphate + L-glutamate + 2 ADP + phosphate + 2 H(+). The catalysed reaction is hydrogencarbonate + NH4(+) + 2 ATP = carbamoyl phosphate + 2 ADP + phosphate + 2 H(+). It participates in amino-acid biosynthesis; L-arginine biosynthesis; carbamoyl phosphate from bicarbonate: step 1/1. The protein operates within pyrimidine metabolism; UMP biosynthesis via de novo pathway; (S)-dihydroorotate from bicarbonate: step 1/3. Its function is as follows. Large subunit of the glutamine-dependent carbamoyl phosphate synthetase (CPSase). CPSase catalyzes the formation of carbamoyl phosphate from the ammonia moiety of glutamine, carbonate, and phosphate donated by ATP, constituting the first step of 2 biosynthetic pathways, one leading to arginine and/or urea and the other to pyrimidine nucleotides. The large subunit (synthetase) binds the substrates ammonia (free or transferred from glutamine from the small subunit), hydrogencarbonate and ATP and carries out an ATP-coupled ligase reaction, activating hydrogencarbonate by forming carboxy phosphate which reacts with ammonia to form carbamoyl phosphate. The polypeptide is Carbamoyl phosphate synthase large chain (Staphylococcus aureus (strain bovine RF122 / ET3-1)).